The chain runs to 232 residues: Probable GTP-binding protein EngB (232 aa).

The EngB-type G domain occupies 13-188 (IGLEVAFAGR…AGVMGNWYEY (176 aa)). GTP-binding positions include 21–28 (GRSNAGKS), 48–52 (GRTQM), 67–70 (DLPG), 134–137 (TKAD), and 167–169 (FSA). Mg(2+) is bound by residues Ser28 and Thr50.

It belongs to the TRAFAC class TrmE-Era-EngA-EngB-Septin-like GTPase superfamily. EngB GTPase family. Requires Mg(2+) as cofactor.

Functionally, necessary for normal cell division and for the maintenance of normal septation. This chain is Probable GTP-binding protein EngB, found in Psychrobacter arcticus (strain DSM 17307 / VKM B-2377 / 273-4).